Consider the following 276-residue polypeptide: Orotidine 5'-phosphate decarboxylase (276 aa).

K93 (proton donor) is an active-site residue.

This sequence belongs to the OMP decarboxylase family. Type 2 subfamily.

It catalyses the reaction orotidine 5'-phosphate + H(+) = UMP + CO2. Its pathway is pyrimidine metabolism; UMP biosynthesis via de novo pathway; UMP from orotate: step 2/2. The chain is Orotidine 5'-phosphate decarboxylase from Halorubrum lacusprofundi (strain ATCC 49239 / DSM 5036 / JCM 8891 / ACAM 34).